The chain runs to 954 residues: cGMP-specific 3',5'-cyclic phosphodiesterase alpha (954 aa).

At 1–259 (MMDTKVDQTI…NTFYSSFPFK (259 aa)) the chain is on the cytoplasmic side. The chain crosses the membrane as a helical span at residues 260 to 280 (LFLHSLYMIFICFIYFVVLYF). Residues 281-296 (MLLKKIYTHPFIFHLS) lie on the Extracellular side of the membrane. Residues 297–317 (VLKFLFDIIFFLSFILYPLFL) traverse the membrane as a helical segment. Topologically, residues 318 to 327 (RLKRIDKIIY) are cytoplasmic. A helical membrane pass occupies residues 328–348 (SSYISSYIFVCVTFLYSFIIF). At 349–365 (KCSSYSVKMNSNTYQNN) the chain is on the extracellular side. A helical transmembrane segment spans residues 366–386 (FVFQNMLFLLINIIYICIFCF). At 387-401 (LKNYMILYSFLYNCR) the chain is on the cytoplasmic side. A helical transmembrane segment spans residues 402–422 (FSIFCILFIFLYYYLFFSLDF). The Extracellular portion of the chain corresponds to 423 to 432 (YRIIHLPLDN). The helical transmembrane segment at 433-453 (FFFPFLCFLFFSFLFIFKIIM) threads the bilayer. Over 454-954 (SLYYEYVYEK…LSKLELIKFE (501 aa)) the chain is Cytoplasmic. The 345-residue stretch at 586–930 (NQEETKSFLS…ERWESHKNDN (345 aa)) folds into the PDEase domain. The Proton donor role is filled by His680. 680 to 684 (HTSLH) is a binding site for 3',5'-cyclic GMP. Residues His684, His720, Asp721, and Asp832 each contribute to the Zn(2+) site. Positions 721, 832, and 884 each coordinate 3',5'-cyclic GMP. Asp721 lines the Mg(2+) pocket.

This sequence belongs to the cyclic nucleotide phosphodiesterase family. Zn(2+) is required as a cofactor. Mg(2+) serves as cofactor.

It localises to the membrane. It catalyses the reaction 3',5'-cyclic GMP + H2O = GMP + H(+). The protein operates within purine metabolism; 3',5'-cyclic GMP degradation; GMP from 3',5'-cyclic GMP: step 1/1. Not inhibited by cAMP. Inhibited by zaprinast. Its function is as follows. Specifically hydrolyzes the second messenger cGMP, which is a key regulator of many important physiological processes. This chain is cGMP-specific 3',5'-cyclic phosphodiesterase alpha, found in Plasmodium falciparum (isolate 3D7).